A 185-amino-acid polypeptide reads, in one-letter code: Ribosome-recycling factor (185 aa).

The protein belongs to the RRF family.

Its subcellular location is the cytoplasm. Responsible for the release of ribosomes from messenger RNA at the termination of protein biosynthesis. May increase the efficiency of translation by recycling ribosomes from one round of translation to another. This chain is Ribosome-recycling factor, found in Novosphingobium aromaticivorans (strain ATCC 700278 / DSM 12444 / CCUG 56034 / CIP 105152 / NBRC 16084 / F199).